A 114-amino-acid polypeptide reads, in one-letter code: Hydrogenase maturation factor HypA (114 aa).

His2 is a binding site for Ni(2+). The Zn(2+) site is built by Cys70, Cys73, Cys86, and Cys89.

It belongs to the HypA/HybF family.

Its function is as follows. Involved in the maturation of [NiFe] hydrogenases. Required for nickel insertion into the metal center of the hydrogenase. The polypeptide is Hydrogenase maturation factor HypA (Trichodesmium erythraeum (strain IMS101)).